The following is a 493-amino-acid chain: MARAPLGVLLLLGLLGRGVGKNEELRLYHHLFNNYDPGSRPVREPEDTVTISLKVTLTNLISLNEKEETLTTSVWIGIDWQDYRLNYSKDDFGGIETLRVPSELVWLPEIVLENNIDGQFGVAYDANVLVYEGGSVTWLPPAIYRSVCAVEVTYFPFDWQNCSLIFRSQTYNAEEVEFTFAVDNDGKTINKIDIDTEAYTENGEWAIDFCPGVIRRHHGGATDGPGETDVIYSLIIRRKPLFYVINIIVPCVLISGLVLLAYFLPAQAGGQKCTVSINVLLAQTVFLFLIAQKIPETSLSVPLLGRFLIFVMVVATLIVMNCVIVLNVSQRTPTTHAMSPRLRHVLLELLPRLLGSPPPPEAPRAASPPRRASSVGLLLRAEELILKKPRSELVFEGQRHRQGTWTAAFCQSLGAAAPEVRCCVDAVNFVAESTRDQEATGEEVSDWVRMGNALDNICFWAALVLFSVGSSLIFLGAYFNRVPDLPYAPCIQP.

An N-terminal signal peptide occupies residues 1–20 (MARAPLGVLLLLGLLGRGVG). At 21-239 (KNEELRLYHH…VIYSLIIRRK (219 aa)) the chain is on the extracellular side. Residues N86 and N161 are each glycosylated (N-linked (GlcNAc...) asparagine). C148 and C162 are joined by a disulfide. A helical membrane pass occupies residues 240–264 (PLFYVINIIVPCVLISGLVLLAYFL). The Cytoplasmic portion of the chain corresponds to 265–272 (PAQAGGQK). The helical transmembrane segment at 273–291 (CTVSINVLLAQTVFLFLIA) threads the bilayer. At 292–306 (QKIPETSLSVPLLGR) the chain is on the extracellular side. A helical transmembrane segment spans residues 307 to 328 (FLIFVMVVATLIVMNCVIVLNV). Topologically, residues 329–456 (SQRTPTTHAM…WVRMGNALDN (128 aa)) are cytoplasmic. The chain crosses the membrane as a helical span at residues 457–480 (ICFWAALVLFSVGSSLIFLGAYFN). Over 481–493 (RVPDLPYAPCIQP) the chain is Extracellular.

It belongs to the ligand-gated ion channel (TC 1.A.9) family. Acetylcholine receptor (TC 1.A.9.1) subfamily. Epsilon/CHRNE sub-subfamily. In terms of assembly, pentamer of two alpha chains, and one each of the beta, delta, and gamma (in immature muscle) or epsilon (in mature muscle) chains. The muscle heteropentamer composed of alpha-1, beta-1, delta, epsilon subunits interacts with the alpha-conotoxin ImII.

The protein resides in the postsynaptic cell membrane. It localises to the cell membrane. The enzyme catalyses K(+)(in) = K(+)(out). It carries out the reaction Na(+)(in) = Na(+)(out). In terms of biological role, after binding acetylcholine, the AChR responds by an extensive change in conformation that affects all subunits and leads to opening of an ion-conducting channel across the plasma membrane. This Homo sapiens (Human) protein is Acetylcholine receptor subunit epsilon.